Consider the following 107-residue polypeptide: Putative double-stranded DNA mimic protein PC1_1990 (107 aa).

Belongs to the putative dsDNA mimic protein family.

May act as a double-stranded DNA (dsDNA) mimic. Probably regulates the activity of a dsDNA-binding protein. The chain is Putative double-stranded DNA mimic protein PC1_1990 from Pectobacterium carotovorum subsp. carotovorum (strain PC1).